The primary structure comprises 157 residues: Probable succinate transporter subunit YjjB (157 aa).

4 consecutive transmembrane segments (helical) span residues isoleucine 6–methionine 26, valine 51–glycine 71, valine 87–isoleucine 107, and phenylalanine 129–tryptophan 149.

This sequence belongs to the ThrE exporter (TC 2.A.79) family. The transporter is composed of YjjB and YjjP.

The protein resides in the cell inner membrane. In terms of biological role, involved in succinate export with YjjP. Both proteins are required for export. This chain is Probable succinate transporter subunit YjjB, found in Proteus mirabilis (strain HI4320).